A 335-amino-acid polypeptide reads, in one-letter code: Flagellar P-ring protein (335 aa).

The N-terminal stretch at Met1–Ala17 is a signal peptide.

Belongs to the FlgI family. In terms of assembly, the basal body constitutes a major portion of the flagellar organelle and consists of four rings (L,P,S, and M) mounted on a central rod.

It localises to the periplasm. It is found in the bacterial flagellum basal body. Assembles around the rod to form the L-ring and probably protects the motor/basal body from shearing forces during rotation. The sequence is that of Flagellar P-ring protein from Borreliella burgdorferi (strain ZS7) (Borrelia burgdorferi).